The primary structure comprises 377 residues: Cytochrome b (377 aa).

4 helical membrane passes run 36 to 56 (WGSL…FLAM), 80 to 102 (WLIR…LHMA), 115 to 135 (VWLI…MGYI), and 181 to 201 (FFVL…IHLI). Heme b-binding residues include His86 and His100. Positions 185 and 199 each coordinate heme b. Position 204 (His204) interacts with a ubiquinone. The next 4 membrane-spanning stretches (helical) occupy residues 227–247 (YSSK…VIIF), 291–311 (LGGV…PFIS), 326–346 (LFWS…MPVV), and 354–374 (LTST…FLMI).

Belongs to the cytochrome b family. In terms of assembly, the main subunits of complex b-c1 are: cytochrome b, cytochrome c1 and the Rieske protein. It depends on heme b as a cofactor.

The protein localises to the mitochondrion inner membrane. Component of the ubiquinol-cytochrome c reductase complex (complex III or cytochrome b-c1 complex) that is part of the mitochondrial respiratory chain. The b-c1 complex mediates electron transfer from ubiquinol to cytochrome c. Contributes to the generation of a proton gradient across the mitochondrial membrane that is then used for ATP synthesis. This is Cytochrome b (mt:Cyt-b) from Myzostoma seymourcollegiorum (Polychaete worm).